The chain runs to 149 residues: Large ribosomal subunit protein bL9 (149 aa).

Belongs to the bacterial ribosomal protein bL9 family.

Binds to the 23S rRNA. The sequence is that of Large ribosomal subunit protein bL9 from Alkaliphilus metalliredigens (strain QYMF).